The primary structure comprises 76 residues: Large ribosomal subunit protein eL20 (76 aa).

Belongs to the eukaryotic ribosomal protein eL20 family. As to quaternary structure, part of the 50S ribosomal subunit. Binds 23S rRNA.

The chain is Large ribosomal subunit protein eL20 from Methanococcus maripaludis (strain DSM 14266 / JCM 13030 / NBRC 101832 / S2 / LL).